The following is a 414-amino-acid chain: Phosphoglycerate kinase (414 aa).

The (2R)-3-phosphoglycerate site is built by Val23, Asp24, Phe25, Asn26, Arg39, Ser62, His63, Gly65, and Arg66. Tyr75 is subject to Phosphotyrosine. Ser76 is modified (phosphoserine). (2R)-3-phosphoglycerate-binding residues include Leu121 and Arg122. At Ser143 the chain carries Phosphoserine. Positions 168 and 169 each coordinate (2R)-3-phosphoglycerate. 3 positions are modified to phosphoserine: Ser172, Ser173, and Ser183. Gly211 contributes to the ADP binding site. Position 211 (Gly211) interacts with CDP. AMP is bound by residues Ala212 and Lys213. Ala212 is an ATP binding site. Ala212 contacts Mg(2+). Residues Ala215 and Asp216 each contribute to the Mg(2+) site. Residue Asp216 coordinates CDP. An AMP-binding site is contributed by Lys217. Lys217 is an ATP binding site. Gly235 contributes to the ADP binding site. Gly235 provides a ligand contact to CDP. Position 236 (Gly236) interacts with AMP. Gly236 contacts ATP. Ser253 and Ser260 each carry phosphoserine. Phosphothreonine is present on Thr299. An AMP-binding site is contributed by Gly310. Gly310 serves as a coordination point for ATP. Ser328 carries the post-translational modification Phosphoserine. Positions 335, 337, and 340 each coordinate CDP. Phe340 provides a ligand contact to ADP. Glu341 serves as a coordination point for AMP. Position 341 (Glu341) interacts with ATP. Ser351 is modified (phosphoserine). The ATP site is built by Asp372 and Thr373. Asp372 serves as a coordination point for Mg(2+). A Phosphothreonine modification is found at Thr373. Phosphoserine occurs at positions 387, 390, 412, and 413.

The protein belongs to the phosphoglycerate kinase family. As to quaternary structure, monomer. Mg(2+) serves as cofactor.

It is found in the cytoplasm. Its subcellular location is the mitochondrion. It catalyses the reaction (2R)-3-phosphoglycerate + ATP = (2R)-3-phospho-glyceroyl phosphate + ADP. It functions in the pathway carbohydrate degradation; glycolysis; pyruvate from D-glyceraldehyde 3-phosphate: step 2/5. Its function is as follows. Catalyzes one of the two ATP producing reactions in the glycolytic pathway via the reversible conversion of 1,3-diphosphoglycerate to 3-phosphoglycerate. Both L- and D- forms of purine and pyrimidine nucleotides can be used as substrates, but the activity is much lower on pyrimidines. Negatively regulates the biosynthesis of acetyl-CoA from pyruvate in the mitochondrion. This chain is Phosphoglycerate kinase (pgk1), found in Schizosaccharomyces pombe (strain 972 / ATCC 24843) (Fission yeast).